The primary structure comprises 106 residues: uncharacterized protein (106 aa).

This is an uncharacterized protein from Saccharomyces cerevisiae (strain ATCC 204508 / S288c) (Baker's yeast).